The sequence spans 349 residues: S-adenosylmethionine:tRNA ribosyltransferase-isomerase (349 aa).

This sequence belongs to the QueA family. Monomer.

The protein resides in the cytoplasm. The catalysed reaction is 7-aminomethyl-7-carbaguanosine(34) in tRNA + S-adenosyl-L-methionine = epoxyqueuosine(34) in tRNA + adenine + L-methionine + 2 H(+). Its pathway is tRNA modification; tRNA-queuosine biosynthesis. In terms of biological role, transfers and isomerizes the ribose moiety from AdoMet to the 7-aminomethyl group of 7-deazaguanine (preQ1-tRNA) to give epoxyqueuosine (oQ-tRNA). This chain is S-adenosylmethionine:tRNA ribosyltransferase-isomerase, found in Azotobacter vinelandii (strain DJ / ATCC BAA-1303).